A 282-amino-acid polypeptide reads, in one-letter code: Pantothenate synthetase (282 aa).

30–37 (MGNLHEGH) lines the ATP pocket. His37 serves as the catalytic Proton donor. Position 61 (Gln61) interacts with (R)-pantoate. A beta-alanine-binding site is contributed by Gln61. Residue 149 to 152 (GEKD) participates in ATP binding. Residue Gln155 participates in (R)-pantoate binding. ATP contacts are provided by residues Val178 and 186–189 (KSSR).

Belongs to the pantothenate synthetase family. Homodimer.

The protein localises to the cytoplasm. The enzyme catalyses (R)-pantoate + beta-alanine + ATP = (R)-pantothenate + AMP + diphosphate + H(+). The protein operates within cofactor biosynthesis; (R)-pantothenate biosynthesis; (R)-pantothenate from (R)-pantoate and beta-alanine: step 1/1. Functionally, catalyzes the condensation of pantoate with beta-alanine in an ATP-dependent reaction via a pantoyl-adenylate intermediate. In Marinobacter nauticus (strain ATCC 700491 / DSM 11845 / VT8) (Marinobacter aquaeolei), this protein is Pantothenate synthetase.